The primary structure comprises 157 residues: Transcription elongation factor GreA (157 aa).

The protein belongs to the GreA/GreB family.

Its function is as follows. Necessary for efficient RNA polymerase transcription elongation past template-encoded arresting sites. The arresting sites in DNA have the property of trapping a certain fraction of elongating RNA polymerases that pass through, resulting in locked ternary complexes. Cleavage of the nascent transcript by cleavage factors such as GreA or GreB allows the resumption of elongation from the new 3'terminus. GreA releases sequences of 2 to 3 nucleotides. This Mesorhizobium japonicum (strain LMG 29417 / CECT 9101 / MAFF 303099) (Mesorhizobium loti (strain MAFF 303099)) protein is Transcription elongation factor GreA.